The following is a 417-amino-acid chain: Membrane protein UL43 (417 aa).

Positions 1–21 (MLRNDSHRAVSPEDGQGRVDD) are disordered. The next 5 membrane-spanning stretches (helical) occupy residues 57 to 77 (GPYA…LGFM), 90 to 110 (IYAW…SLGE), 119 to 139 (APGP…LLVL), 146 to 166 (LFLL…VGGL), and 175 to 195 (WWIG…GPGA). The interval 217 to 254 (AGESLSRRPPEDPERPGVPGPPSPPTPQRSHGPPADEV) is disordered. Residues 221–231 (LSRRPPEDPER) show a composition bias toward basic and acidic residues. Pro residues predominate over residues 232–243 (PGVPGPPSPPTP). 5 helical membrane passes run 263-283 (ENVW…VKTV), 291-311 (PGPG…AVAL), 323-343 (LTDP…GLVF), 348-368 (VVVY…VLGL), and 389-409 (GLFF…CPPG).

The protein belongs to the alphaherpesvirinae HHV-1 UL43 family.

Its subcellular location is the membrane. In Human herpesvirus 1 (strain 17) (HHV-1), this protein is Membrane protein UL43.